Consider the following 380-residue polypeptide: MKWLVLLGLVAFSECIFKIPLRRVKTMRKTLSGKNMLNDVLKEHPYRLPQISFRGSNLIIHPLRNIRDTFYVGNITIGTPPQEFQVLFDTGSSVLWVPSVLCNSSTCSIHVRFRHLQSSTFRTTNKTFWITYGAGTMKGVVAHDTVRIGDLVSIDQPFGLSMAEYGFHGRRFDGVLGLNYPRQSCCRPTPIFDKLKNQGAISEPVFAFYLSKDEQEGSVVMFGGVDHRYYKGELNWVPLVKADDWTIQVDRISMRREVIACSDGCDALLDTGASFIHGPGRLIDDIQKLIGSEPRDLKHYISCSAVNTLPSIIFTINGINYPVPAQAYILKGSTGHCYTAFRAKRVRTSTESWVLGDVFLRLYFSVFDRGNDRIGLAPAM.

The N-terminal stretch at 1 to 15 (MKWLVLLGLVAFSEC) is a signal peptide. A propeptide spans 16–53 (IFKIPLRRVKTMRKTLSGKNMLNDVLKEHPYRLPQISF) (activation peptide). Residues 71 to 377 (YVGNITIGTP…DRGNDRIGLA (307 aa)) form the Peptidase A1 domain. Asn74 carries an N-linked (GlcNAc...) asparagine glycan. Asp89 is a catalytic residue. A disulfide bridge links Cys102 with Cys107. A glycan (N-linked (GlcNAc...) asparagine) is linked at Asn125. Cys261 and Cys265 are oxidised to a cystine. The active site involves Asp270. Cys303 and Cys337 are oxidised to a cystine.

The protein belongs to the peptidase A1 family. As to expression, trophoblast and placental tissue. Produced specifically in the invasive binucleate cells of the placenta.

The protein localises to the secreted. The protein resides in the extracellular space. The sequence is that of Pregnancy-associated glycoprotein 4 from Ovis aries (Sheep).